Consider the following 226-residue polypeptide: UPF0758 protein PputW619_0186 (226 aa).

The MPN domain occupies 102–224 (ALESPSAVRR…PLSMVEQGWI (123 aa)). Zn(2+)-binding residues include His173, His175, and Asp186. Positions 173–186 (HNHPSGNSEPSQDD) match the JAMM motif motif.

It belongs to the UPF0758 family.

In Pseudomonas putida (strain W619), this protein is UPF0758 protein PputW619_0186.